A 112-amino-acid polypeptide reads, in one-letter code: HTH-type transcriptional regulator YodB (112 aa).

The region spanning 6–105 (CPKMESAFSL…WADQFCEPGD (100 aa)) is the HTH hxlR-type domain.

Its function is as follows. Negatively regulates yodC and azoR1 which may contribute to the degradation of aromatic compounds. Probably positively regulates the catechol-specific transcription of mhqNOP, mhqED, and mhqA. This Bacillus subtilis (strain 168) protein is HTH-type transcriptional regulator YodB (yodB).